The following is a 130-amino-acid chain: Ribosome-binding factor A (130 aa).

This sequence belongs to the RbfA family. As to quaternary structure, monomer. Binds 30S ribosomal subunits, but not 50S ribosomal subunits or 70S ribosomes.

Its subcellular location is the cytoplasm. In terms of biological role, one of several proteins that assist in the late maturation steps of the functional core of the 30S ribosomal subunit. Associates with free 30S ribosomal subunits (but not with 30S subunits that are part of 70S ribosomes or polysomes). Required for efficient processing of 16S rRNA. May interact with the 5'-terminal helix region of 16S rRNA. The protein is Ribosome-binding factor A of Pseudomonas aeruginosa (strain LESB58).